Here is a 1505-residue protein sequence, read N- to C-terminus: MGPKKGKRSHSKNHHHHNNGNNNNNNNSGGGSSSDILYTYSQDTRILLFKVILTQNEEIICMVIQIAYGLPGLPKISDISRDLGILILKLPNRTIRELELFLESKNIYFREDQHINYLNEIPQPTTTTTSPPPPPPPSSISTTTTTTTATAIEIESSSGLTSNITDSTEIQLDSTTTDTKTTSTTSTTTNNSSDSNNNNNNNNNNNSNNILNFPFNCQNKSKQKRPISKEESFNKMVQYNFDLGKIFDEFTREVLLDDLKNDLKIDNIPIDNISISPTPIISPVFQEYDLFLMDSFIILCGQLDNVKLTLEEFKDYYKKYKLLNQYIEDFKDNLINDFLVTVEILASWYIPQKDYSIVKFINCFGEMLDSTIIESFSYIFNKTIKKEDDWSISFIQAALGSNEEFKRQVMCLNDELIQDRYDQSLYSIMHPIKFDNVREFILIYSRDENYFEPQEFWYLICKYDAIAITQHIINNNIAEEDLSKRSGKTYNSNLSENPLEINPLSLLEICSANFSHKIASILFQFYDFKDSMPTRFSLRGVFKPTTTTTTTTTTTTTTTTTIDKDEKDKENNNNNVISQQFQYFRVLDVNCYFNDVIKKRAPIFIDLMTQSNIYLNTEVGEGSDENVDTHESIYSFQNSTEYLAINSNSIHRLKRSSISLLSKVLEFNDRDTLISLLKNLTQGGCTLCKDLIDEKQLLITISRPQYHQSIQILHQNGYTIIPKYQLRDPYIFFAGSKQILQYLLEIHTNSLSETIDIRHWIQAIMSAGQYSSETEFFQYYPKIQELSLRDKYSRTLNILELQYILGHIEGIEFLLEKYLDFTKPYHLDNQELLEIFDVTFVQKKDIRTEESLKAEKDLLEQEENEKKRLKEKRKKEEKEKKKQQNLKQKSLITNNTTTTTTTTPIPITVPIPTQTQTPTQTPTQTPIPTPIPTTPIPTTPIPIPIQLTPTTPKTPKTPKTPKTPTTPKTPITPKTPKNSTLDKQTISTPKTPPPLSVNTTPITPSPPPQTIATTITTTTTTPKTTKTTTTSKIPTLIIELNKYDISIGKFKFSRKDEFIIGRGSNGTLVFKGIWNDRIPVAIKQMHKAFNPLISKEIEVLITLTNKNCNNIVRYIDQEEDDMFVYLGLTLCNGSLQNLVEKDLEINLISTSNNENNNNNKLKNFIGSELRLLELIKDIVYGIQFLHQQGIVHNDLNPRNILIKDDRFIISDLGLSKMEVTSSYSFTMHAPTGQEGFHPAEVLLEKRKTKSVDIFSMGCILFYLMTGGQHPFGDKFFRMANILTDKPILEPLKHNLVACDLISQMISKNESDRPTTENILLHPFFWNHEKKVKFIDASLNLFKDSNGLFTSKLNKLINQFQDTDGVNTTSTPFLSKPWNQLIDPTLIEHITNKQNQLSGGSSIGNNNNNSLTLSGKKFYFYDYSQVKDLVRCIRNTIQHHKEIQRLISQSPSSSNKQEVLDCLESQELVLSYFEEKVPDLLLFLYQKFKKHLDSKSLIYFNDLIIK.

Residues 1-18 (MGPKKGKRSHSKNHHHHN) are compositionally biased toward basic residues. Disordered regions lie at residues 1-30 (MGPK…NSGG), 121-211 (IPQP…NNIL), 548-571 (TTTT…DKEN), and 862-1013 (EENE…TIAT). Low complexity predominate over residues 139–158 (SISTTTTTTTATAIEIESSS). Positions 159–172 (GLTSNITDSTEIQL) are enriched in polar residues. Low complexity-rich tracts occupy residues 173-209 (DSTT…NSNN) and 548-561 (TTTT…TTTT). Composition is skewed to basic and acidic residues over residues 562 to 571 (IDKDEKDKEN) and 862 to 882 (EENE…EKKK). Residues 846-892 (IRTEESLKAEKDLLEQEENEKKRLKEKRKKEEKEKKKQQNLKQKSLI) are a coiled coil. Residues 896 to 924 (TTTTTTTTPIPITVPIPTQTQTPTQTPTQ) show a composition bias toward low complexity. Pro residues predominate over residues 925–943 (TPIPTPIPTTPIPTTPIPI). Low complexity-rich tracts occupy residues 944–954 (PIQLTPTTPKT) and 960–977 (TPKT…KTPK). Residues 978–989 (NSTLDKQTISTP) are compositionally biased toward polar residues. Residues 1054-1324 (RKDEFIIGRG…TENILLHPFF (271 aa)) form the Protein kinase domain. ATP contacts are provided by residues 1060–1068 (IGRGSNGTL) and K1083. The Proton acceptor role is filled by D1194. The 179-residue stretch at 1327 to 1505 (HEKKVKFIDA…LIYFNDLIIK (179 aa)) folds into the KEN domain.

The protein belongs to the protein kinase superfamily. Ser/Thr protein kinase family.

It catalyses the reaction L-seryl-[protein] + ATP = O-phospho-L-seryl-[protein] + ADP + H(+). The enzyme catalyses L-threonyl-[protein] + ATP = O-phospho-L-threonyl-[protein] + ADP + H(+). This chain is Probable serine/threonine-protein kinase irlD (irlD), found in Dictyostelium discoideum (Social amoeba).